The sequence spans 116 residues: Large ribosomal subunit protein uL18 (116 aa).

The protein belongs to the universal ribosomal protein uL18 family. As to quaternary structure, part of the 50S ribosomal subunit; part of the 5S rRNA/L5/L18/L25 subcomplex. Contacts the 5S and 23S rRNAs.

This is one of the proteins that bind and probably mediate the attachment of the 5S RNA into the large ribosomal subunit, where it forms part of the central protuberance. This is Large ribosomal subunit protein uL18 from Caulobacter vibrioides (strain ATCC 19089 / CIP 103742 / CB 15) (Caulobacter crescentus).